Here is a 404-residue protein sequence, read N- to C-terminus: XK-related protein 8 (404 aa).

The next 8 membrane-spanning stretches (helical) occupy residues 14 to 34 (FVFS…DVWL), 44 to 64 (VTWF…VQTF), 169 to 189 (AVQF…VVDY), 209 to 229 (LIYF…LALC), 232 to 252 (VLSG…ALWA), 262 to 282 (SVAG…FSWF), 293 to 313 (SAIY…TWWC), and 324 to 344 (ALAL…FKAL).

It belongs to the XK family.

Its subcellular location is the cell membrane. It carries out the reaction a 1,2-diacyl-sn-glycero-3-phospho-L-serine(in) = a 1,2-diacyl-sn-glycero-3-phospho-L-serine(out). In terms of biological role, phospholipid scramblase that promotes phosphatidylserine exposure on apoptotic cell surface, possibly by mediating phospholipid scrambling. Phosphatidylserine is a specific marker only present at the surface of apoptotic cells and acts as a specific signal for engulfment. This chain is XK-related protein 8, found in Gasterosteus aculeatus (Three-spined stickleback).